The chain runs to 429 residues: MDRIRIIGGNKLHGTIPISGAKNAALPLMIAALLSDETLILDNVPRLADVALLQRILGNHGVDIMAAGKRPGDHEYQGQTLHISAKNIIDTTAPYELVSKMRASFWVIAPLLARMHEAKVSLPGGCAIGTRPVDLLIMALEKLGVELSIDAGYVVAKAPGGLKGATIEFPKVTVSGTHVALMAATLAKGTTIISNAACEPEITDVADCLNKMGARITGAGTPRILIEGVDKLHGARHTVLPDRIETGTYAMAVAMTGGEVQLSGARPELLQSALDVLTQAGATITINNDGIKVARNGAGISPVTVTTAPFPGFPTDLQAQLMALMTRAKGASHITETIFENRFMHVQELARFGAKISLDGETATIDGVTKLRGAPVMATDLRASVSLVIAALAAEGETMVNRIYHLDRGFERLEEKLSACGATIERISG.

22-23 (KN) provides a ligand contact to phosphoenolpyruvate. Position 102 (Arg-102) interacts with UDP-N-acetyl-alpha-D-glucosamine. The active-site Proton donor is Cys-126. Cys-126 is modified (2-(S-cysteinyl)pyruvic acid O-phosphothioketal). UDP-N-acetyl-alpha-D-glucosamine contacts are provided by residues 131–135 (RPVDL), Asp-316, and Ile-338.

This sequence belongs to the EPSP synthase family. MurA subfamily.

The protein resides in the cytoplasm. It carries out the reaction phosphoenolpyruvate + UDP-N-acetyl-alpha-D-glucosamine = UDP-N-acetyl-3-O-(1-carboxyvinyl)-alpha-D-glucosamine + phosphate. It functions in the pathway cell wall biogenesis; peptidoglycan biosynthesis. Its function is as follows. Cell wall formation. Adds enolpyruvyl to UDP-N-acetylglucosamine. In Rhodopseudomonas palustris (strain HaA2), this protein is UDP-N-acetylglucosamine 1-carboxyvinyltransferase.